A 152-amino-acid chain; its full sequence is 3-hydroxyacyl-[acyl-carrier-protein] dehydratase FabZ (152 aa).

His58 is an active-site residue.

The protein belongs to the thioester dehydratase family. FabZ subfamily.

Its subcellular location is the cytoplasm. The enzyme catalyses a (3R)-hydroxyacyl-[ACP] = a (2E)-enoyl-[ACP] + H2O. Its function is as follows. Involved in unsaturated fatty acids biosynthesis. Catalyzes the dehydration of short chain beta-hydroxyacyl-ACPs and long chain saturated and unsaturated beta-hydroxyacyl-ACPs. The chain is 3-hydroxyacyl-[acyl-carrier-protein] dehydratase FabZ from Prochlorococcus marinus (strain MIT 9515).